The sequence spans 439 residues: Protein translocase subunit SecY (439 aa).

The next 10 helical transmembrane spans lie at 23 to 43, 77 to 97, 125 to 145, 154 to 174, 187 to 207, 217 to 237, 274 to 294, 317 to 337, 369 to 389, and 397 to 417; these read IASV…PIPG, IFAL…LLTL, LVLA…ISGM, FYFY…LMWL, ISII…VHTI, ILLF…VVFI, VIPA…ISWF, YLIL…GLVF, IMIR…LIPE, and VPFY…MDFI.

The protein belongs to the SecY/SEC61-alpha family. In terms of assembly, component of the Sec protein translocase complex. Heterotrimer consisting of SecY, SecE and SecG subunits. The heterotrimers can form oligomers, although 1 heterotrimer is thought to be able to translocate proteins. Interacts with the ribosome. Interacts with SecDF, and other proteins may be involved. Interacts with SecA.

Its subcellular location is the cell membrane. The central subunit of the protein translocation channel SecYEG. Consists of two halves formed by TMs 1-5 and 6-10. These two domains form a lateral gate at the front which open onto the bilayer between TMs 2 and 7, and are clamped together by SecE at the back. The channel is closed by both a pore ring composed of hydrophobic SecY resides and a short helix (helix 2A) on the extracellular side of the membrane which forms a plug. The plug probably moves laterally to allow the channel to open. The ring and the pore may move independently. This is Protein translocase subunit SecY from Buchnera aphidicola subsp. Schizaphis graminum (strain Sg).